The chain runs to 362 residues: Caspase activity and apoptosis inhibitor 1 (362 aa).

Over residues 1–14 (MTGKKSSREKRRKR) the composition is skewed to basic residues. Disordered stretches follow at residues 1–44 (MTGK…SGCG) and 65–101 (TGGG…GSLQ). Residues 19–32 (AAAALAAPDLVPAV) are compositionally biased toward low complexity. Gly residues-rich tracts occupy residues 33 to 44 (GGSGSGSTSGCG) and 65 to 74 (TGGGSGGSCW). Ser89 is subject to Phosphoserine. The residue at position 90 (Thr90) is a Phosphothreonine. Residue Lys105 forms a Glycyl lysine isopeptide (Lys-Gly) (interchain with G-Cter in SUMO2) linkage. Residues Ser121 and Ser204 each carry the phosphoserine modification. Disordered regions lie at residues 226 to 251 (SCVD…GKGE), 269 to 291 (GPCN…EAGQ), and 309 to 332 (LAES…DVQP). Residues 235 to 251 (RENKQPEGLELKQGKGE) are compositionally biased toward basic and acidic residues. Over residues 273–282 (EEAAAPEVPE) the composition is skewed to low complexity. The stretch at 282-312 (ENTVQSEAGQIDDLEKDIEKSVNEILGLAES) forms a coiled coil. Ser313 carries the post-translational modification Phosphoserine.

Anti-apoptotic protein that modulates a caspase-10 dependent mitochondrial caspase-3/9 feedback amplification loop. This is Caspase activity and apoptosis inhibitor 1 (CAAP1) from Bos taurus (Bovine).